We begin with the raw amino-acid sequence, 707 residues long: GDNF-inducible zinc finger protein 1 (707 aa).

The BTB domain occupies 31–103 (CDVTVIVDYQ…VYTARVRVKE (73 aa)). Over residues 149 to 165 (VEASSGPQVSVTPSSKA) the composition is skewed to polar residues. Disordered stretches follow at residues 149–221 (VEAS…PKIR) and 243–309 (RRLR…KDGE). Basic and acidic residues-rich tracts occupy residues 198–213 (PSKK…KDVA), 243–278 (RRLR…EPAS), and 287–298 (VEREESLQKVEG). C2H2-type zinc fingers lie at residues 316–338 (FQCT…IKYH), 347–370 (YRCD…RHVH), 376–399 (FPCE…LQVH), 406–428 (HRCG…ERTH), 434–456 (YGCT…LRVH), 462–484 (FVCD…KRCH), 490–512 (FMCE…NRIH), 518–540 (FKCE…IKVH), 546–568 (YCCD…HRIH), and 574–596 (YMCN…TSIH). At S612 the chain carries Phosphoserine.

It belongs to the krueppel C2H2-type zinc-finger protein family. In terms of assembly, interacts with NCL.

It localises to the cytoplasm. Its subcellular location is the nucleus. The protein resides in the nucleoplasm. It is found in the nucleolus. Its function is as follows. Transcriptional repressor that binds the GZF1 responsive element (GRE) (consensus: 5'-TGCGCN[TG][CA]TATA-3'). May be regulating VSX2/HOX10 expression. The chain is GDNF-inducible zinc finger protein 1 (Gzf1) from Rattus norvegicus (Rat).